Consider the following 247-residue polypeptide: DNA polymerase sliding clamp (247 aa).

It belongs to the PCNA family. In terms of assembly, homotrimer. The subunits circularize to form a toroid; DNA passes through its center. Replication factor C (RFC) is required to load the toroid on the DNA.

Sliding clamp subunit that acts as a moving platform for DNA processing. Responsible for tethering the catalytic subunit of DNA polymerase and other proteins to DNA during high-speed replication. The protein is DNA polymerase sliding clamp of Thermofilum pendens (strain DSM 2475 / Hrk 5).